Here is a 360-residue protein sequence, read N- to C-terminus: Phospho-N-acetylmuramoyl-pentapeptide-transferase (360 aa).

The next 10 membrane-spanning stretches (helical) occupy residues 21-41 (YITV…LWIG), 73-93 (TMGG…WANL), 94-114 (ANPY…IGFV), 132-152 (WKYF…YAIG), 168-188 (IMPQ…VGTS), 199-219 (GLAI…AWAT), 235-255 (FSAE…GFLW), 263-283 (VFMG…VAVL), 288-308 (FLLV…ILQV), and 338-358 (VIVR…VTLK).

It belongs to the glycosyltransferase 4 family. MraY subfamily. The cofactor is Mg(2+).

It is found in the cell inner membrane. It carries out the reaction UDP-N-acetyl-alpha-D-muramoyl-L-alanyl-gamma-D-glutamyl-meso-2,6-diaminopimeloyl-D-alanyl-D-alanine + di-trans,octa-cis-undecaprenyl phosphate = di-trans,octa-cis-undecaprenyl diphospho-N-acetyl-alpha-D-muramoyl-L-alanyl-D-glutamyl-meso-2,6-diaminopimeloyl-D-alanyl-D-alanine + UMP. The protein operates within cell wall biogenesis; peptidoglycan biosynthesis. In terms of biological role, catalyzes the initial step of the lipid cycle reactions in the biosynthesis of the cell wall peptidoglycan: transfers peptidoglycan precursor phospho-MurNAc-pentapeptide from UDP-MurNAc-pentapeptide onto the lipid carrier undecaprenyl phosphate, yielding undecaprenyl-pyrophosphoryl-MurNAc-pentapeptide, known as lipid I. The protein is Phospho-N-acetylmuramoyl-pentapeptide-transferase of Pasteurella multocida (strain Pm70).